A 284-amino-acid chain; its full sequence is MDAIKKKMLAMKMEKENAVDRAEQNEQKLRDTEEQKAKIEEDLNNLQKKCANLENDFDNVNEQLQEAMAKLETSEKRVTEMEQEVSGTTRKITLLEEDLERNEERLQTATERLEEASKAADESERGARVLESRSLADDERIDQLEAQLKEAKYIAEDAERKYDEAARKLAITEVDLERAEARLEAAEAKILELEEELKVVGNNMKSLEISEQEASQREDSYEETIRDLTQRLKDAENRATEAERTVSKLQKEVDRLEDELLAEKEKYKAISDELDQTFAELAGY.

The stretch at 1 to 273 (MDAIKKKMLA…KEKYKAISDE (273 aa)) forms a coiled coil.

This sequence belongs to the tropomyosin family. As to quaternary structure, homodimer.

Its function is as follows. Tropomyosin, in association with the troponin complex, plays a central role in the calcium dependent regulation of muscle contraction. In Haliotis diversicolor (Abalone), this protein is Tropomyosin.